The sequence spans 307 residues: Type 2A encapsulin shell protein (307 aa).

It belongs to the encapsulin family. Family 2A subfamily. In terms of assembly, the encapsulin nanocompartment is formed by 60 subunits; monomers form pentamers which assemble to form shells. There are 12 charged pores where the pentamers meet as well as 3-fold axis channels and dimer channels. Isolated from bacteria in a complex with cysteine desulfurase (AC Q9KII6).

Its subcellular location is the encapsulin nanocompartment. The protein localises to the cell membrane. In terms of biological role, shell component of a type 2A encapsulin nanocompartment. Forms encapsulin nanocompartments about 24 nm in diameter from 60 monomers, probably involved in sulfur metabolism. Probably encapsulates cysteine desulfurase. In Mycolicibacterium paratuberculosis (strain ATCC BAA-968 / K-10) (Mycobacterium paratuberculosis), this protein is Type 2A encapsulin shell protein.